Here is a 299-residue protein sequence, read N- to C-terminus: Serine/threonine-protein kinase 1 (299 aa).

The region spanning 39–277 is the Protein kinase domain; that stretch reads IATKPMFEGG…FKGLVSHPWF (239 aa). Residues 45-53 and lysine 66 each bind ATP; that span reads FEGGRRNNV. The active-site Proton acceptor is the aspartate 153.

It belongs to the protein kinase superfamily. Ser/Thr protein kinase family.

The protein localises to the virion. It is found in the host cytoplasm. The enzyme catalyses L-seryl-[protein] + ATP = O-phospho-L-seryl-[protein] + ADP + H(+). It carries out the reaction L-threonyl-[protein] + ATP = O-phospho-L-threonyl-[protein] + ADP + H(+). Its function is as follows. Essential for viral replication. It may mediate the virus progression through DNA replication. The protein is Serine/threonine-protein kinase 1 of African swine fever virus (isolate Pig/Kenya/KEN-50/1950) (ASFV).